Consider the following 239-residue polypeptide: Uridylate kinase (239 aa).

ATP is bound at residue 13–16 (KLSG). Residue G55 coordinates UMP. The ATP site is built by G56 and R60. UMP-binding positions include D75 and 136–143 (TGNPFFTT). Residues T163, N164, Y169, and D172 each contribute to the ATP site.

This sequence belongs to the UMP kinase family. Homohexamer.

Its subcellular location is the cytoplasm. The catalysed reaction is UMP + ATP = UDP + ADP. Its pathway is pyrimidine metabolism; CTP biosynthesis via de novo pathway; UDP from UMP (UMPK route): step 1/1. Its activity is regulated as follows. Inhibited by UTP. In terms of biological role, catalyzes the reversible phosphorylation of UMP to UDP. This is Uridylate kinase from Neisseria meningitidis serogroup C / serotype 2a (strain ATCC 700532 / DSM 15464 / FAM18).